The chain runs to 287 residues: Ketoacyl reductase HetN (287 aa).

Residue 11-35 participates in NAD(+) binding; the sequence is LTGASRGLGVYIARALAKEQATVVC. Substrate is bound at residue serine 142. Tyrosine 155 serves as the catalytic Proton acceptor.

Belongs to the short-chain dehydrogenases/reductases (SDR) family.

In terms of biological role, may be involved in repressing heterocyst differentiation and may be essential for preventing all vegetative cells from differentiating. In Nostoc sp. (strain PCC 7120 / SAG 25.82 / UTEX 2576), this protein is Ketoacyl reductase HetN (hetN).